Here is a 385-residue protein sequence, read N- to C-terminus: Succinate--CoA ligase [ADP-forming] subunit beta (385 aa).

In terms of domain architecture, ATP-grasp spans 9–237 (KEILRQFGVN…LEAEHPLEIE (229 aa)). ATP-binding positions include Lys45, 52–54 (GRG), Val94, and Glu101. The Mg(2+) site is built by Asn192 and Asp206. Residues Asn257 and 314 to 316 (GIT) each bind substrate.

Belongs to the succinate/malate CoA ligase beta subunit family. In terms of assembly, heterotetramer of two alpha and two beta subunits. It depends on Mg(2+) as a cofactor.

The enzyme catalyses succinate + ATP + CoA = succinyl-CoA + ADP + phosphate. It catalyses the reaction GTP + succinate + CoA = succinyl-CoA + GDP + phosphate. It functions in the pathway carbohydrate metabolism; tricarboxylic acid cycle; succinate from succinyl-CoA (ligase route): step 1/1. Functionally, succinyl-CoA synthetase functions in the citric acid cycle (TCA), coupling the hydrolysis of succinyl-CoA to the synthesis of either ATP or GTP and thus represents the only step of substrate-level phosphorylation in the TCA. The beta subunit provides nucleotide specificity of the enzyme and binds the substrate succinate, while the binding sites for coenzyme A and phosphate are found in the alpha subunit. This chain is Succinate--CoA ligase [ADP-forming] subunit beta, found in Deinococcus deserti (strain DSM 17065 / CIP 109153 / LMG 22923 / VCD115).